The chain runs to 305 residues: Aspartate carbamoyltransferase catalytic subunit (305 aa).

Residues Arg-56 and Thr-57 each coordinate carbamoyl phosphate. Lys-84 is a binding site for L-aspartate. Residues Arg-106, His-136, and Gln-139 each coordinate carbamoyl phosphate. The L-aspartate site is built by Arg-169 and Arg-221. Residues Ala-262 and Pro-263 each coordinate carbamoyl phosphate.

It belongs to the aspartate/ornithine carbamoyltransferase superfamily. ATCase family. Heterododecamer (2C3:3R2) of six catalytic PyrB chains organized as two trimers (C3), and six regulatory PyrI chains organized as three dimers (R2).

It catalyses the reaction carbamoyl phosphate + L-aspartate = N-carbamoyl-L-aspartate + phosphate + H(+). It participates in pyrimidine metabolism; UMP biosynthesis via de novo pathway; (S)-dihydroorotate from bicarbonate: step 2/3. Catalyzes the condensation of carbamoyl phosphate and aspartate to form carbamoyl aspartate and inorganic phosphate, the committed step in the de novo pyrimidine nucleotide biosynthesis pathway. In Streptococcus sanguinis (strain SK36), this protein is Aspartate carbamoyltransferase catalytic subunit.